The following is a 107-amino-acid chain: Putative double-stranded DNA mimic protein Asuc_1259 (107 aa).

This sequence belongs to the putative dsDNA mimic protein family.

May act as a double-stranded DNA (dsDNA) mimic. Probably regulates the activity of a dsDNA-binding protein. This chain is Putative double-stranded DNA mimic protein Asuc_1259, found in Actinobacillus succinogenes (strain ATCC 55618 / DSM 22257 / CCUG 43843 / 130Z).